Here is a 202-residue protein sequence, read N- to C-terminus: MRYWYLRLAVFLGALAVPAWWLYQAWIFALGPDPGKTLVDRLGLGALVLLLLTLAMTPLQKLSGWPGWIAVRRQLGLWCFTYVLLHLSAYYVFILGLDWGQLGIELSKRPYIIVGMLGFVCLFLLAITSNRFAMRKLGSRWKKLHRLVYLILGLGLLHMLWVVRADLEEWTLYAVVGASLMLLRLPSIARRLPRLRTRHGVS.

6 consecutive transmembrane segments (helical) span residues 8–28, 42–62, 75–95, 110–130, 147–167, and 169–189; these read LAVF…AWIF, LGLG…LQKL, LGLW…VFIL, PYII…ITSN, LVYL…RADL, and EWTL…PSIA.

The protein belongs to the MsrQ family. In terms of assembly, heterodimer of a catalytic subunit (MsrP) and a heme-binding subunit (MsrQ). The cofactor is FMN. Heme b is required as a cofactor.

The protein localises to the cell inner membrane. Functionally, part of the MsrPQ system that repairs oxidized periplasmic proteins containing methionine sulfoxide residues (Met-O), using respiratory chain electrons. Thus protects these proteins from oxidative-stress damage caused by reactive species of oxygen and chlorine generated by the host defense mechanisms. MsrPQ is essential for the maintenance of envelope integrity under bleach stress, rescuing a wide series of structurally unrelated periplasmic proteins from methionine oxidation. MsrQ provides electrons for reduction to the reductase catalytic subunit MsrP, using the quinone pool of the respiratory chain. The polypeptide is Protein-methionine-sulfoxide reductase heme-binding subunit MsrQ (Pseudomonas aeruginosa (strain ATCC 15692 / DSM 22644 / CIP 104116 / JCM 14847 / LMG 12228 / 1C / PRS 101 / PAO1)).